Here is a 264-residue protein sequence, read N- to C-terminus: Phosphonoacetaldehyde hydrolase (264 aa).

Asp-9 (nucleophile) is an active-site residue. Mg(2+) is bound by residues Asp-9 and Ala-11. Residue Lys-50 is the Schiff-base intermediate with substrate of the active site. Asp-183 is a binding site for Mg(2+).

This sequence belongs to the HAD-like hydrolase superfamily. PhnX family. Homodimer. It depends on Mg(2+) as a cofactor.

The enzyme catalyses phosphonoacetaldehyde + H2O = acetaldehyde + phosphate + H(+). In terms of biological role, involved in phosphonate degradation. This Bacillus mycoides (strain KBAB4) (Bacillus weihenstephanensis) protein is Phosphonoacetaldehyde hydrolase.